We begin with the raw amino-acid sequence, 270 residues long: uncharacterized protein (270 aa).

Positions 235 to 270 are disordered; it reads LADSDLEADSDDSESFEFVENPEPSENGSEPTIKND. The span at 238–251 shows a compositional bias: acidic residues; that stretch reads SDLEADSDDSESFE. The span at 255–270 shows a compositional bias: low complexity; sequence NPEPSENGSEPTIKND.

This is an uncharacterized protein from Halorubrum sp. PV6 (HRPV-1).